A 329-amino-acid polypeptide reads, in one-letter code: Synaptonemal complex central element protein 1 (329 aa).

The disordered stretch occupies residues 1 to 33 (MATRPQPLSVEPEGSADLLHGPEGARGRRGSTQ). Coiled coils occupy residues 28–168 (RRGS…ETLM) and 194–294 (KEQL…ILAQ). Residues 295–329 (IQSTQKEEDSSWRTASPKPLEAHKETVQERPSSRT) are disordered. Residues 314 to 329 (LEAHKETVQERPSSRT) show a composition bias toward basic and acidic residues.

Belongs to the SYCE family. Homodimer. Found in a complex with SYCP1 and SYCE2. Interacts with SYCP1, SYCE2 and SYCE3. Interacts with SIX6OS1.

Its subcellular location is the nucleus. It localises to the chromosome. Major component of the transverse central element of synaptonemal complexes (SCS), formed between homologous chromosomes during meiotic prophase. Requires SYCP1 in order to be incorporated into the central element. May have a role in the synaptonemal complex assembly, stabilization and recombination. This chain is Synaptonemal complex central element protein 1 (Syce1), found in Rattus norvegicus (Rat).